We begin with the raw amino-acid sequence, 185 residues long: Elongation factor P (185 aa).

This sequence belongs to the elongation factor P family.

It is found in the cytoplasm. The protein operates within protein biosynthesis; polypeptide chain elongation. Involved in peptide bond synthesis. Stimulates efficient translation and peptide-bond synthesis on native or reconstituted 70S ribosomes in vitro. Probably functions indirectly by altering the affinity of the ribosome for aminoacyl-tRNA, thus increasing their reactivity as acceptors for peptidyl transferase. This chain is Elongation factor P, found in Nitrosomonas eutropha (strain DSM 101675 / C91 / Nm57).